A 251-amino-acid chain; its full sequence is tRNA (guanine-N(7)-)-methyltransferase (251 aa).

4 residues coordinate S-adenosyl-L-methionine: Glu80, Glu105, Asp132, and Asp155. Asp155 is an active-site residue. Substrate is bound by residues Lys159, Asp191, and 228-231; that span reads TKFE.

The protein belongs to the class I-like SAM-binding methyltransferase superfamily. TrmB family.

The catalysed reaction is guanosine(46) in tRNA + S-adenosyl-L-methionine = N(7)-methylguanosine(46) in tRNA + S-adenosyl-L-homocysteine. It participates in tRNA modification; N(7)-methylguanine-tRNA biosynthesis. Functionally, catalyzes the formation of N(7)-methylguanine at position 46 (m7G46) in tRNA. The polypeptide is tRNA (guanine-N(7)-)-methyltransferase (Histophilus somni (strain 129Pt) (Haemophilus somnus)).